We begin with the raw amino-acid sequence, 181 residues long: Large ribosomal subunit protein uL5c (181 aa).

Belongs to the universal ribosomal protein uL5 family. Part of the 50S ribosomal subunit; contacts the 5S rRNA.

The protein resides in the plastid. It localises to the chloroplast. Its function is as follows. Binds 5S rRNA, forms part of the central protuberance of the 50S subunit. This Pyropia yezoensis (Susabi-nori) protein is Large ribosomal subunit protein uL5c (rpl5).